A 355-amino-acid chain; its full sequence is Protein ATP1B4 (355 aa).

Topologically, residues 1-108 (MRRQLRSRRA…SLARTGQSLS (108 aa)) are nuclear. The disordered stretch occupies residues 35-76 (EEEEAEEARVMVVPDLEEEEKEEEEEKEEDEKEEEESHHQDT). A compositionally biased stretch (acidic residues) spans 49–68 (DLEEEEKEEEEEKEEDEKEE). The helical; Signal-anchor for type II membrane protein transmembrane segment at 109–129 (LLLVIYFFFYASLAAVITLCM) threads the bilayer. The Perinuclear space segment spans residues 130-355 (YTLFLTISPY…RVIFTLNIET (226 aa)).

It belongs to the X(+)/potassium ATPases subunit beta family. Associates with a SMAD7-transcriptional complex. Interacts with SNW1 and TOR1AIP1. Does not associate with known Na,K-ATPase alpha-subunits. In terms of tissue distribution, expressed in skeletal muscle (at protein level). Expressed during postnatal development in skeletal muscle and heart.

The protein localises to the nucleus inner membrane. May act as a transcriptional coregulator during muscle development through its interaction with SNW1. Has lost its ancestral function as a Na,K-ATPase beta-subunit. This Sus scrofa (Pig) protein is Protein ATP1B4 (ATP1B4).